Reading from the N-terminus, the 521-residue chain is Leucine-rich repeat-containing protein 24 (521 aa).

Residues 1–23 (MALRAPTLLLLLLGLLLLPLLPG) form the signal peptide. Positions 24-58 (LPPRATGCPAACRCYSATVECGALRLRVVPPGIPP) constitute an LRRNT domain. LRR repeat units lie at residues 59-80 (GTQT…SLAP), 83-104 (ALRH…AFRA), 107-128 (RLLE…AFVG), 131-152 (QLRV…TFLH), 155-176 (RLQE…ALAG), and 179-200 (SLAL…ALQP). Asn-91 is a glycosylation site (N-linked (GlcNAc...) asparagine). The LRRCT domain occupies 212–267 (NPWRCDCALHWLGSWIKEGGRRLLSSRDKKITCAEPPRLALQSLLEVSGGSLICIP). One can recognise an Ig-like C2-type domain in the interval 268 to 371 (PSVNVEPPEF…ARVPFHLLVN (104 aa)). A disulfide bond links Cys-289 and Cys-353. A disordered region spans residues 306–330 (QPRDGKPQAQAQLEGGAPGLGGHGT). N-linked (GlcNAc...) asparagine glycosylation is found at Asn-342 and Asn-371. Residues 374-395 (RQQSQQLPDPQAPATRPVGHEP) form a disordered region. A helical membrane pass occupies residues 414–434 (AITAAIALLALTALLLAAMIC).

The protein localises to the membrane. In Mus musculus (Mouse), this protein is Leucine-rich repeat-containing protein 24 (Lrrc24).